The following is a 477-amino-acid chain: Trigger factor (477 aa).

The PPIase FKBP-type domain occupies 169-254 (EDRVTIDYLG…VKEVAKPNEL (86 aa)). A disordered region spans residues 435–477 (VSKEELTAEDEDAASEAKPAKKAAAKKKAAPKKKAEEGKSEEA). Over residues 454–466 (AKKAAAKKKAAPK) the composition is skewed to basic residues. Residues 467-477 (KKAEEGKSEEA) show a composition bias toward basic and acidic residues.

This sequence belongs to the FKBP-type PPIase family. Tig subfamily.

The protein localises to the cytoplasm. The enzyme catalyses [protein]-peptidylproline (omega=180) = [protein]-peptidylproline (omega=0). In terms of biological role, involved in protein export. Acts as a chaperone by maintaining the newly synthesized protein in an open conformation. Functions as a peptidyl-prolyl cis-trans isomerase. In Brucella suis biovar 1 (strain 1330), this protein is Trigger factor.